The following is a 140-amino-acid chain: Alpha-lactalbumin (140 aa).

Residues 1-19 form the signal peptide; sequence MMSLLPLLLIGIVLPATQA. The C-type lysozyme domain maps to 20 to 140; the sequence is KDYGKCELNQ…CRENLDQWNC (121 aa). 4 disulfide bridges follow: C25–C140, C47–C131, C80–C96, and C92–C110. Ca(2+) is bound by residues K98, D101, D103, D106, and D107.

Lactose synthase (LS) is a heterodimer of a catalytic component, beta1,4-galactosyltransferase (beta4Gal-T1) and a regulatory component, alpha-lactalbumin (LA). Mammary gland specific. Secreted in milk.

It is found in the secreted. Its function is as follows. Regulatory subunit of lactose synthase, changes the substrate specificity of galactosyltransferase in the mammary gland making glucose a good acceptor substrate for this enzyme. This enables LS to synthesize lactose, the major carbohydrate component of milk. In other tissues, galactosyltransferase transfers galactose onto the N-acetylglucosamine of the oligosaccharide chains in glycoproteins. This is Alpha-lactalbumin (LALBA) from Trichosurus vulpecula (Brush-tailed possum).